A 163-amino-acid polypeptide reads, in one-letter code: Phosphopantetheine adenylyltransferase (163 aa).

Serine 9 is a substrate binding site. ATP-binding positions include 9–10 (SF) and histidine 17. Substrate is bound by residues lysine 41, valine 78, and arginine 92. ATP is bound by residues 93-95 (GLR), glutamate 103, and 128-134 (SRPITAT).

It belongs to the bacterial CoaD family. As to quaternary structure, homohexamer. Requires Mg(2+) as cofactor.

The protein localises to the cytoplasm. It carries out the reaction (R)-4'-phosphopantetheine + ATP + H(+) = 3'-dephospho-CoA + diphosphate. Its pathway is cofactor biosynthesis; coenzyme A biosynthesis; CoA from (R)-pantothenate: step 4/5. Its function is as follows. Reversibly transfers an adenylyl group from ATP to 4'-phosphopantetheine, yielding dephospho-CoA (dPCoA) and pyrophosphate. This is Phosphopantetheine adenylyltransferase from Rhizobium meliloti (strain 1021) (Ensifer meliloti).